The following is a 477-amino-acid chain: tRNA-2-methylthio-N(6)-dimethylallyladenosine synthase (477 aa).

Residues 3–120 (KKLHIKTWGC…LPAMIKQVQE (118 aa)) enclose the MTTase N-terminal domain. The [4Fe-4S] cluster site is built by C12, C49, C83, C157, C161, and C164. Residues 143-375 (RAEGATAFVS…QHVINNQSMQ (233 aa)) form the Radical SAM core domain. Residues 378 to 441 (RAMLGSTQRI…PNSLRGRFIR (64 aa)) form the TRAM domain.

It belongs to the methylthiotransferase family. MiaB subfamily. Monomer. [4Fe-4S] cluster serves as cofactor.

Its subcellular location is the cytoplasm. The enzyme catalyses N(6)-dimethylallyladenosine(37) in tRNA + (sulfur carrier)-SH + AH2 + 2 S-adenosyl-L-methionine = 2-methylsulfanyl-N(6)-dimethylallyladenosine(37) in tRNA + (sulfur carrier)-H + 5'-deoxyadenosine + L-methionine + A + S-adenosyl-L-homocysteine + 2 H(+). Its function is as follows. Catalyzes the methylthiolation of N6-(dimethylallyl)adenosine (i(6)A), leading to the formation of 2-methylthio-N6-(dimethylallyl)adenosine (ms(2)i(6)A) at position 37 in tRNAs that read codons beginning with uridine. In Aeromonas salmonicida (strain A449), this protein is tRNA-2-methylthio-N(6)-dimethylallyladenosine synthase.